We begin with the raw amino-acid sequence, 190 residues long: Peptide methionine sulfoxide reductase MsrA (190 aa).

Cys-21 is a catalytic residue.

It belongs to the MsrA Met sulfoxide reductase family.

It catalyses the reaction L-methionyl-[protein] + [thioredoxin]-disulfide + H2O = L-methionyl-(S)-S-oxide-[protein] + [thioredoxin]-dithiol. It carries out the reaction [thioredoxin]-disulfide + L-methionine + H2O = L-methionine (S)-S-oxide + [thioredoxin]-dithiol. Functionally, has an important function as a repair enzyme for proteins that have been inactivated by oxidation. Catalyzes the reversible oxidation-reduction of methionine sulfoxide in proteins to methionine. In Polynucleobacter asymbioticus (strain DSM 18221 / CIP 109841 / QLW-P1DMWA-1) (Polynucleobacter necessarius subsp. asymbioticus), this protein is Peptide methionine sulfoxide reductase MsrA.